The chain runs to 407 residues: CCCH-type zinc finger protein oma-1 (407 aa).

A disordered region spans residues 1–39 (MNVNGENNEKIDEHHLESSLAGVPTLPVSPLDHAKDLSQ). The span at 7 to 17 (NNEKIDEHHLE) shows a compositional bias: basic and acidic residues. The required for taf-4 binding stretch occupies residues 46 to 80 (IGDLVTQTANLIAIKKQLLEDIAFNQHIQSMQVRA). C3H1-type zinc fingers lie at residues 112–140 (SYKT…HGEE) and 154–182 (KYKT…HPDH). Position 239 is a phosphothreonine; by mbk-2 and GSK3 (T239). A Phosphoserine; by mbk-2 modification is found at S302. Phosphothreonine; by GSK3 is present on T339.

As to quaternary structure, interacts with taf-4 (via C-terminus). Interacts with ifet-1. Component of a ribonucleoprotein particle complex that interacts with cgh-1 and car-1 in an RNA-dependent manner. Association with many proteins is dependent on the presence of RNA. Phosphorylation by mbk-2 and by gsk-3 are required for its rapid degradation following meiosis II. Exclusively expressed in the hermaphrodite gonad. Expressed prior to oocyte division. Widely distributed throughout gonadal oocytes from the mitotic stage to the developing diakinesis stage. Expressed in sperm.

The protein localises to the cytoplasm. It is found in the cytoplasmic granule. The protein resides in the nucleus. Functionally, zinc-finger RNA-binding protein that binds to 5'-UA[AU]-3' motifs in the 3'-UTR of maternal mRNAs to suppress translation in oocytes and embryos. Acts as a ribonucleoprotein particle component that may exert part of its function within cytoplasmic foci of unfertilized oocytes. Acts redundantly with oma-2 to control the temporal expression and distribution of maternal proteins and thereby promote meiotic progression, oocyte maturation, fertilization and embryonic development. Recruits the translational repressor ifet-1 to the 3'-UTR of mei-1 and zif-1 to negatively regulate their translation. By suppressing the translation of the E3 ligase zif-1, may in turn play a role in the stabilization of zif-1 targets such as the maternal transcriptional repressor protein pie-1. Following fertilization, sequesters the transcription initiation factor, taf-4, in the cytoplasm, which prevents its nuclear localization and thus allows for transcriptional suppression in early embryos, but not in oocytes. Also, together with oma-2, is involved in P-granule distribution during embryonic development. In Caenorhabditis elegans, this protein is CCCH-type zinc finger protein oma-1.